The sequence spans 536 residues: Bifunctional purine biosynthesis protein PurH (536 aa).

Positions 8–158 constitute an MGS-like domain; it reads IPAPDEVRIQ…KNHAYVTIVT (151 aa).

The protein belongs to the PurH family.

It catalyses the reaction (6R)-10-formyltetrahydrofolate + 5-amino-1-(5-phospho-beta-D-ribosyl)imidazole-4-carboxamide = 5-formamido-1-(5-phospho-D-ribosyl)imidazole-4-carboxamide + (6S)-5,6,7,8-tetrahydrofolate. The enzyme catalyses IMP + H2O = 5-formamido-1-(5-phospho-D-ribosyl)imidazole-4-carboxamide. The protein operates within purine metabolism; IMP biosynthesis via de novo pathway; 5-formamido-1-(5-phospho-D-ribosyl)imidazole-4-carboxamide from 5-amino-1-(5-phospho-D-ribosyl)imidazole-4-carboxamide (10-formyl THF route): step 1/1. It participates in purine metabolism; IMP biosynthesis via de novo pathway; IMP from 5-formamido-1-(5-phospho-D-ribosyl)imidazole-4-carboxamide: step 1/1. The polypeptide is Bifunctional purine biosynthesis protein PurH (Sinorhizobium fredii (strain NBRC 101917 / NGR234)).